A 446-amino-acid polypeptide reads, in one-letter code: Probable glycine dehydrogenase (decarboxylating) subunit 1 (446 aa).

It belongs to the GcvP family. N-terminal subunit subfamily. In terms of assembly, the glycine cleavage system is composed of four proteins: P, T, L and H. In this organism, the P 'protein' is a heterodimer of two subunits.

It catalyses the reaction N(6)-[(R)-lipoyl]-L-lysyl-[glycine-cleavage complex H protein] + glycine + H(+) = N(6)-[(R)-S(8)-aminomethyldihydrolipoyl]-L-lysyl-[glycine-cleavage complex H protein] + CO2. Its function is as follows. The glycine cleavage system catalyzes the degradation of glycine. The P protein binds the alpha-amino group of glycine through its pyridoxal phosphate cofactor; CO(2) is released and the remaining methylamine moiety is then transferred to the lipoamide cofactor of the H protein. The sequence is that of Probable glycine dehydrogenase (decarboxylating) subunit 1 from Desulforamulus reducens (strain ATCC BAA-1160 / DSM 100696 / MI-1) (Desulfotomaculum reducens).